Reading from the N-terminus, the 188-residue chain is MGLKSDTWIKKMSKKGMIEPFCEKQVGKNIVSYGLSSYGYDIRVGNEFMIFTNIGANLVDPKSFDERNVVEITTEENGYCLVPPNSFALARTIEYFRIPRNVLAICLGKSTYARCGIIVNVTPFEPEFEGHITIEISNTTPLPAKIYANEGIAQVLFLEGDETCEVSYKDKKGKYQGQKGITLPKVIK.

109–114 (KSTYAR) serves as a coordination point for dCTP. The active-site Proton donor/acceptor is the Glu135. DCTP-binding residues include Gln154, Tyr168, and Gln178.

The protein belongs to the dCTP deaminase family. As to quaternary structure, homotrimer.

The catalysed reaction is dCTP + H2O + H(+) = dUTP + NH4(+). The protein operates within pyrimidine metabolism; dUMP biosynthesis; dUMP from dCTP (dUTP route): step 1/2. Catalyzes the deamination of dCTP to dUTP. The protein is dCTP deaminase of Helicobacter hepaticus (strain ATCC 51449 / 3B1).